We begin with the raw amino-acid sequence, 390 residues long: tRNA(Met) cytidine acetate ligase (390 aa).

Residues 7–20 (VVEYNPFHNGHKLH), Gly-101, Asn-162, and Arg-187 each bind ATP.

This sequence belongs to the TmcAL family.

It localises to the cytoplasm. The enzyme catalyses cytidine(34) in elongator tRNA(Met) + acetate + ATP = N(4)-acetylcytidine(34) in elongator tRNA(Met) + AMP + diphosphate. In terms of biological role, catalyzes the formation of N(4)-acetylcytidine (ac(4)C) at the wobble position of elongator tRNA(Met), using acetate and ATP as substrates. First activates an acetate ion to form acetyladenylate (Ac-AMP) and then transfers the acetyl group to tRNA to form ac(4)C34. This is tRNA(Met) cytidine acetate ligase from Listeria monocytogenes serotype 4b (strain CLIP80459).